Here is a 292-residue protein sequence, read N- to C-terminus: 33 kDa chaperonin (292 aa).

2 disulfides stabilise this stretch: Cys230-Cys232 and Cys263-Cys266.

Belongs to the HSP33 family. In terms of processing, under oxidizing conditions two disulfide bonds are formed involving the reactive cysteines. Under reducing conditions zinc is bound to the reactive cysteines and the protein is inactive.

Its subcellular location is the cytoplasm. In terms of biological role, redox regulated molecular chaperone. Protects both thermally unfolding and oxidatively damaged proteins from irreversible aggregation. Plays an important role in the bacterial defense system toward oxidative stress. This is 33 kDa chaperonin from Salmonella typhimurium (strain LT2 / SGSC1412 / ATCC 700720).